We begin with the raw amino-acid sequence, 423 residues long: Proline racemase A (423 aa).

An N-terminal signal peptide occupies residues 1-31; that stretch reads MRKSVCPKQKFFFSAFPFFFFFCVFPLISRT. Cysteine 160 (proton acceptor) is an active-site residue. 161 to 162 is a substrate binding site; sequence GH. 3 N-linked (GlcNAc...) asparagine glycosylation sites follow: asparagine 213, asparagine 266, and asparagine 282. Residue aspartate 326 participates in substrate binding. Cysteine 330 functions as the Proton donor in the catalytic mechanism. A substrate-binding site is contributed by 331–332; it reads GT.

It belongs to the proline racemase family. As to quaternary structure, homodimer.

The protein resides in the secreted. It localises to the membrane. Its subcellular location is the cytoplasm. It catalyses the reaction L-proline = D-proline. With respect to regulation, inhibited by maleic acid, iodoacetamide, iodoacetate and, most particularly, pyrrole-2-carboxylic acid. Its function is as follows. Catalyzes the interconversion of L- and D-proline. Secreted isoform 1 contributes to parasite immune evasion by acting as a B-cell mitogen. Probably involved in parasite differentiation and infectivity. In Trypanosoma cruzi (strain CL Brener), this protein is Proline racemase A (PA45-A).